The following is a 301-amino-acid chain: Glycine--tRNA ligase alpha subunit (301 aa).

It belongs to the class-II aminoacyl-tRNA synthetase family. In terms of assembly, tetramer of two alpha and two beta subunits.

Its subcellular location is the cytoplasm. It carries out the reaction tRNA(Gly) + glycine + ATP = glycyl-tRNA(Gly) + AMP + diphosphate. In Actinobacillus pleuropneumoniae serotype 5b (strain L20), this protein is Glycine--tRNA ligase alpha subunit.